The following is a 318-amino-acid chain: Transaldolase (318 aa).

Lys132 functions as the Schiff-base intermediate with substrate in the catalytic mechanism.

Belongs to the transaldolase family. Type 1 subfamily. Homodimer.

Its subcellular location is the cytoplasm. It catalyses the reaction D-sedoheptulose 7-phosphate + D-glyceraldehyde 3-phosphate = D-erythrose 4-phosphate + beta-D-fructose 6-phosphate. The protein operates within carbohydrate degradation; pentose phosphate pathway; D-glyceraldehyde 3-phosphate and beta-D-fructose 6-phosphate from D-ribose 5-phosphate and D-xylulose 5-phosphate (non-oxidative stage): step 2/3. In terms of biological role, transaldolase is important for the balance of metabolites in the pentose-phosphate pathway. The protein is Transaldolase of Shewanella baltica (strain OS223).